The sequence spans 561 residues: Oxygen-dependent choline dehydrogenase (561 aa).

7-36 (DYIIVGAGSAGNVLASRLAEDADVTVLLLE) lines the FAD pocket. The active-site Proton acceptor is the His-474.

It belongs to the GMC oxidoreductase family. It depends on FAD as a cofactor.

The enzyme catalyses choline + A = betaine aldehyde + AH2. It catalyses the reaction betaine aldehyde + NAD(+) + H2O = glycine betaine + NADH + 2 H(+). It participates in amine and polyamine biosynthesis; betaine biosynthesis via choline pathway; betaine aldehyde from choline (cytochrome c reductase route): step 1/1. Functionally, involved in the biosynthesis of the osmoprotectant glycine betaine. Catalyzes the oxidation of choline to betaine aldehyde and betaine aldehyde to glycine betaine at the same rate. The sequence is that of Oxygen-dependent choline dehydrogenase from Paraburkholderia xenovorans (strain LB400).